Consider the following 64-residue polypeptide: Large ribosomal subunit protein uL30 (64 aa).

The protein belongs to the universal ribosomal protein uL30 family. Part of the 50S ribosomal subunit.

This Desulforudis audaxviator (strain MP104C) protein is Large ribosomal subunit protein uL30.